Consider the following 354-residue polypeptide: NADH-quinone oxidoreductase subunit H (354 aa).

The next 8 membrane-spanning stretches (helical) occupy residues 23–43 (LVRA…LILW), 91–111 (YIIA…VIPF), 124–144 (LLYV…AGWA), 162–182 (ISYE…TGSL), 203–223 (ILSW…ISGV), 250–270 (GMAF…ISAL), 291–311 (IPGF…FIWL), and 330–350 (IFIP…VSPW).

This sequence belongs to the complex I subunit 1 family. As to quaternary structure, NDH-1 is composed of 14 different subunits. Subunits NuoA, H, J, K, L, M, N constitute the membrane sector of the complex.

It is found in the cell inner membrane. The enzyme catalyses a quinone + NADH + 5 H(+)(in) = a quinol + NAD(+) + 4 H(+)(out). Functionally, NDH-1 shuttles electrons from NADH, via FMN and iron-sulfur (Fe-S) centers, to quinones in the respiratory chain. The immediate electron acceptor for the enzyme in this species is believed to be ubiquinone. Couples the redox reaction to proton translocation (for every two electrons transferred, four hydrogen ions are translocated across the cytoplasmic membrane), and thus conserves the redox energy in a proton gradient. This subunit may bind ubiquinone. This is NADH-quinone oxidoreductase subunit H from Ralstonia pickettii (strain 12J).